An 815-amino-acid polypeptide reads, in one-letter code: Kinesin heavy chain (815 aa).

The region spanning 11 to 329 (GVQVFCRIRP…LLFGARAKTI (319 aa)) is the Kinesin motor domain. 88-95 (GQTSSGKT) lines the ATP pocket. Coiled coils occupy residues 335-374 (INEE…RWRA), 422-554 (PITD…LDEC), and 695-785 (PAQK…RMNA). The segment at 788 to 815 (IVKPIRPGQVYTSPSAGMSQGAPNGSNA) is disordered. Over residues 797–815 (VYTSPSAGMSQGAPNGSNA) the composition is skewed to polar residues.

It belongs to the TRAFAC class myosin-kinesin ATPase superfamily. Kinesin family. Kinesin subfamily. In terms of assembly, oligomer composed of two heavy chains and two light chains.

Its subcellular location is the cytoplasm. The protein resides in the cytoskeleton. In terms of biological role, microtubule-dependent motor protein required for organelle transport. Plays a role in endosome transport. Required for the transport of mitochondria along the axon of motor neurons. Involved in the nuclear migration of hyp7 hypodermal precursor cells. Required for the formation of dendritic branches of PVD sensory neurons. In non-ciliated neurons such as the PVD and PHC neurons, required for the organization of minus-end out microtubules in dendrites. Also required for the minus-end out orientation of microtubules in dendrites of AQR gas-sensing neurons. Involved in the localization of unc-33 to neurites. Positively regulates cilium position and dendrite morphogenesis in the postembryonic AQR and PQR gas-sensing neurons. Plays a more prominent role in regulating dendrite morphogenesis in AQR than in PQR neurons. Plays a role in regulating the localization of grdn-1 to the distal dendrites of AQR sensory neurons. The protein is Kinesin heavy chain of Caenorhabditis elegans.